A 213-amino-acid chain; its full sequence is Nucleolar protein 12 (213 aa).

Positions 33-96 (GFHKRKVERK…RLVTAKTESV (64 aa)) form a coiled coil. The segment at 109–213 (TISDLDLSGA…LTGKAQHSRE (105 aa)) is disordered. Over residues 130-139 (AGDESEEEAS) the composition is skewed to acidic residues. Basic residues predominate over residues 170 to 182 (AHSRKKVKRKHPR).

This sequence belongs to the RRP17 family. As to quaternary structure, interacts with KIAA1191.

It is found in the nucleus. It localises to the nucleolus. The protein localises to the cytoplasm. Multifunctional RNA binding protein that plays a role in RNA metabolism and DNA maintenance. Participates in the resolution of DNA stress and the maintenance of genome integrity by localizing to sites of DNA insults. Also plays a role in proper nucleolar organization by limiting nucleolar size and regulating nucleolar number. Mechanistically, regulates the nucleolar levels of fibrillarin and nucleolin, two key players in pre-rRNA processing and ribosome assembly. The chain is Nucleolar protein 12 (NOL12) from Pongo abelii (Sumatran orangutan).